Reading from the N-terminus, the 339-residue chain is Glyceraldehyde-3-phosphate dehydrogenase (339 aa).

Residues 11–12 (TI) and G110 each bind NAD(+). 139 to 141 (SCN) provides a ligand contact to D-glyceraldehyde 3-phosphate. Catalysis depends on C140, which acts as the Nucleophile. R168 is a binding site for NAD(+). 194-195 (HG) contributes to the D-glyceraldehyde 3-phosphate binding site. Q301 is a binding site for NAD(+).

It belongs to the glyceraldehyde-3-phosphate dehydrogenase family. Homotetramer.

It is found in the cytoplasm. It catalyses the reaction D-glyceraldehyde 3-phosphate + phosphate + NADP(+) = (2R)-3-phospho-glyceroyl phosphate + NADPH + H(+). It carries out the reaction D-glyceraldehyde 3-phosphate + phosphate + NAD(+) = (2R)-3-phospho-glyceroyl phosphate + NADH + H(+). The protein operates within carbohydrate degradation; glycolysis; pyruvate from D-glyceraldehyde 3-phosphate: step 1/5. The sequence is that of Glyceraldehyde-3-phosphate dehydrogenase from Methanospirillum hungatei JF-1 (strain ATCC 27890 / DSM 864 / NBRC 100397 / JF-1).